The chain runs to 335 residues: Dehydration-responsive element-binding protein 2A (335 aa).

Disordered regions lie at residues 1–32 (MAVYDQSGDRNRTQIDTSRKRKSRSRGDGTTV) and 50–74 (STKKRKVPAKGSKKGCMKGKGGPEN). Positions 19–55 (RKRKSRSRGDGTTVAERLKRWKEYNETVEEVSTKKRK) match the Nuclear localization signal motif. The segment covering 52-66 (KKRKVPAKGSKKGCM) has biased composition (basic residues). Positions 78–135 (SFRGVRQRIWGKWVAEIREPNRGSRLWLGTFPTAQEAASAYDEAAKAMYGPLARLNFP) form a DNA-binding region, AP2/ERF. A disordered region spans residues 279–304 (QDRYPGNSVANGSYRPESQQSGFDPL). The segment covering 286 to 304 (SVANGSYRPESQQSGFDPL) has biased composition (polar residues).

It belongs to the AP2/ERF transcription factor family. ERF subfamily. In terms of assembly, interacts with MED25. Binds to DPB3-1 in the nucleus during heat-stress. In terms of processing, ubiquitinated by DRIP1 and DRIP2. Ubiquitination probably leads to its subsequent degradation, thus negatively regulating response to drought. In terms of tissue distribution, expressed preferentially in roots and stems, and at a lower level in leaves.

The protein localises to the nucleus. Its function is as follows. Transcriptional activator that binds specifically to the DNA sequence 5'-[AG]CCGAC-3'. Binding to the C-repeat/DRE element mediates high salinity- and dehydration-inducible transcription. Promotes the expression of heat stress-inducible genes by contributing to the formation of a heat stress-specific transcriptional complex with NF-Y subunits (e.g. DPB3-1, NF-YA2 and NF-YB3) at the promoter of target genes, thus promoting heat tolerance. This is Dehydration-responsive element-binding protein 2A from Arabidopsis thaliana (Mouse-ear cress).